The chain runs to 315 residues: Porphobilinogen deaminase (315 aa).

Cysteine 238 bears the S-(dipyrrolylmethanemethyl)cysteine mark.

The protein belongs to the HMBS family. In terms of assembly, monomer. Dipyrromethane is required as a cofactor.

The enzyme catalyses 4 porphobilinogen + H2O = hydroxymethylbilane + 4 NH4(+). It functions in the pathway porphyrin-containing compound metabolism; protoporphyrin-IX biosynthesis; coproporphyrinogen-III from 5-aminolevulinate: step 2/4. Its function is as follows. Tetrapolymerization of the monopyrrole PBG into the hydroxymethylbilane pre-uroporphyrinogen in several discrete steps. The polypeptide is Porphobilinogen deaminase (Albidiferax ferrireducens (strain ATCC BAA-621 / DSM 15236 / T118) (Rhodoferax ferrireducens)).